The sequence spans 579 residues: Rop guanine nucleotide exchange factor 6 (579 aa).

Residues 31-61 show a composition bias toward low complexity; sequence ESTTDSSLSSSSSGVGSSSGRSSVAERSVSS. The tract at residues 31–89 is disordered; it reads ESTTDSSLSSSSSGVGSSSGRSSVAERSVSSPPTKSQILGWPLGQGSWRKSSGKMKKKT. The 382-residue stretch at 98-479 folds into the PRONE domain; that stretch reads FKRVGTETSE…DISKDDGDGD (382 aa).

Functionally, guanine-nucleotide exchange factor (GEF) that acts as an activator of Rop (Rho of plants) GTPases by promoting the exchange of GDP for GTP. The protein is Rop guanine nucleotide exchange factor 6 (ROPGEF6) of Arabidopsis thaliana (Mouse-ear cress).